The primary structure comprises 488 residues: Malonate-semialdehyde dehydrogenase (488 aa).

Positions 150, 152, 176, 179, 180, 229, and 251 each coordinate NAD(+). Cysteine 284 functions as the Nucleophile in the catalytic mechanism. Glutamate 382 is an NAD(+) binding site.

The protein belongs to the aldehyde dehydrogenase family. IolA subfamily. Homotetramer.

It carries out the reaction 3-oxopropanoate + NAD(+) + CoA + H2O = hydrogencarbonate + acetyl-CoA + NADH + H(+). It catalyses the reaction 2-methyl-3-oxopropanoate + NAD(+) + CoA + H2O = propanoyl-CoA + hydrogencarbonate + NADH + H(+). It functions in the pathway polyol metabolism; myo-inositol degradation into acetyl-CoA; acetyl-CoA from myo-inositol: step 7/7. Its function is as follows. Catalyzes the oxidation of malonate semialdehyde (MSA) and methylmalonate semialdehyde (MMSA) into acetyl-CoA and propanoyl-CoA, respectively. Is involved in a myo-inositol catabolic pathway. Bicarbonate, and not CO2, is the end-product of the enzymatic reaction. The chain is Malonate-semialdehyde dehydrogenase from Listeria monocytogenes serotype 4a (strain HCC23).